A 459-amino-acid chain; its full sequence is Cysteine--tRNA ligase (459 aa).

Cysteine 31 is a Zn(2+) binding site. Positions 33–43 (PTVYYNPHIGN) match the 'HIGH' region motif. 3 residues coordinate Zn(2+): cysteine 216, histidine 241, and glutamate 245. The short motif at 274-278 (KMSKS) is the 'KMSKS' region element. Lysine 277 serves as a coordination point for ATP.

The protein belongs to the class-I aminoacyl-tRNA synthetase family. Monomer. Requires Zn(2+) as cofactor.

The protein localises to the cytoplasm. It carries out the reaction tRNA(Cys) + L-cysteine + ATP = L-cysteinyl-tRNA(Cys) + AMP + diphosphate. This Rickettsia conorii (strain ATCC VR-613 / Malish 7) protein is Cysteine--tRNA ligase.